A 284-amino-acid polypeptide reads, in one-letter code: 4-diphosphocytidyl-2-C-methyl-D-erythritol kinase (284 aa).

The active site involves Lys14. An ATP-binding site is contributed by 97–107; sequence PMGGGLGGGSS. Residue Asp139 is part of the active site.

Belongs to the GHMP kinase family. IspE subfamily.

It catalyses the reaction 4-CDP-2-C-methyl-D-erythritol + ATP = 4-CDP-2-C-methyl-D-erythritol 2-phosphate + ADP + H(+). Its pathway is isoprenoid biosynthesis; isopentenyl diphosphate biosynthesis via DXP pathway; isopentenyl diphosphate from 1-deoxy-D-xylulose 5-phosphate: step 3/6. Catalyzes the phosphorylation of the position 2 hydroxy group of 4-diphosphocytidyl-2C-methyl-D-erythritol. The protein is 4-diphosphocytidyl-2-C-methyl-D-erythritol kinase of Psychromonas ingrahamii (strain DSM 17664 / CCUG 51855 / 37).